The sequence spans 457 residues: Chromosomal replication initiator protein DnaA (457 aa).

The domain I, interacts with DnaA modulators stretch occupies residues M1–T71. A domain II region spans residues T71–S119. The tract at residues E120–S337 is domain III, AAA+ region. ATP-binding residues include G165, G167, K168, and T169. Residues D338–S457 are domain IV, binds dsDNA.

Belongs to the DnaA family. Oligomerizes as a right-handed, spiral filament on DNA at oriC.

The protein resides in the cytoplasm. Plays an essential role in the initiation and regulation of chromosomal replication. ATP-DnaA binds to the origin of replication (oriC) to initiate formation of the DNA replication initiation complex once per cell cycle. Binds the DnaA box (a 9 base pair repeat at the origin) and separates the double-stranded (ds)DNA. Forms a right-handed helical filament on oriC DNA; dsDNA binds to the exterior of the filament while single-stranded (ss)DNA is stabiized in the filament's interior. The ATP-DnaA-oriC complex binds and stabilizes one strand of the AT-rich DNA unwinding element (DUE), permitting loading of DNA polymerase. After initiation quickly degrades to an ADP-DnaA complex that is not apt for DNA replication. Binds acidic phospholipids. This Buchnera aphidicola subsp. Baizongia pistaciae (strain Bp) protein is Chromosomal replication initiator protein DnaA.